We begin with the raw amino-acid sequence, 150 residues long: 15 kDa calcium-binding protein (150 aa).

N-acetylalanine is present on A1. 4 EF-hand domains span residues 7–42 (TDAE…AGKS), 43–78 (FSEE…KMMK), 81–116 (WKKS…RIEP), and 118–150 (MSKE…IKSS). Ca(2+) is bound by residues D22, D24, S26, T28, D56, D58, S60, T62, E67, D94, D96, N98, E105, D131, D133, D135, K137, and E142.

The protein resides in the nucleus. It localises to the cytoplasm. It is found in the cytoskeleton. The protein localises to the spindle. Its function is as follows. May play an important role in mitosis of sea urchin egg. May function as a Ca(2+)-dependent intracellular modulator of microtubule assembly. This Hemicentrotus pulcherrimus (Sea urchin) protein is 15 kDa calcium-binding protein.